We begin with the raw amino-acid sequence, 188 residues long: Peptidyl-tRNA hydrolase (188 aa).

Phenylalanine 15 provides a ligand contact to tRNA. Catalysis depends on histidine 20, which acts as the Proton acceptor. Tyrosine 64, asparagine 66, and asparagine 112 together coordinate tRNA.

It belongs to the PTH family. As to quaternary structure, monomer.

The protein resides in the cytoplasm. The enzyme catalyses an N-acyl-L-alpha-aminoacyl-tRNA + H2O = an N-acyl-L-amino acid + a tRNA + H(+). In terms of biological role, hydrolyzes ribosome-free peptidyl-tRNAs (with 1 or more amino acids incorporated), which drop off the ribosome during protein synthesis, or as a result of ribosome stalling. Its function is as follows. Catalyzes the release of premature peptidyl moieties from peptidyl-tRNA molecules trapped in stalled 50S ribosomal subunits, and thus maintains levels of free tRNAs and 50S ribosomes. The protein is Peptidyl-tRNA hydrolase of Borrelia turicatae (strain 91E135).